Reading from the N-terminus, the 240-residue chain is 1-(5-phosphoribosyl)-5-[(5-phosphoribosylamino)methylideneamino] imidazole-4-carboxamide isomerase (240 aa).

The Proton acceptor role is filled by aspartate 8. Catalysis depends on aspartate 129, which acts as the Proton donor.

Belongs to the HisA/HisF family.

The protein localises to the cytoplasm. The catalysed reaction is 1-(5-phospho-beta-D-ribosyl)-5-[(5-phospho-beta-D-ribosylamino)methylideneamino]imidazole-4-carboxamide = 5-[(5-phospho-1-deoxy-D-ribulos-1-ylimino)methylamino]-1-(5-phospho-beta-D-ribosyl)imidazole-4-carboxamide. Its pathway is amino-acid biosynthesis; L-histidine biosynthesis; L-histidine from 5-phospho-alpha-D-ribose 1-diphosphate: step 4/9. The polypeptide is 1-(5-phosphoribosyl)-5-[(5-phosphoribosylamino)methylideneamino] imidazole-4-carboxamide isomerase (Listeria monocytogenes serotype 4a (strain HCC23)).